A 147-amino-acid polypeptide reads, in one-letter code: Hemoglobin subunit gamma (147 aa).

Residues 3 to 147 (YFTAEEKAAI…VASALARKYH (145 aa)) form the Globin domain. Residues histidine 64 and histidine 93 each coordinate heme b.

This sequence belongs to the globin family. In terms of assembly, heterotetramer of two alpha chains and two gamma chains in fetal hemoglobin (Hb F). Red blood cells.

Gamma chains make up the fetal hemoglobin F, in combination with alpha chains. This is Hemoglobin subunit gamma (HBG) from Dugong dugon (Dugong).